We begin with the raw amino-acid sequence, 341 residues long: Protein-glutamate methylesterase/protein-glutamine glutaminase 1 (341 aa).

A Response regulatory domain is found at 2–119; that stretch reads KVGIVNDSAL…SDAKLTAGPL (118 aa). Aspartate 53 bears the 4-aspartylphosphate mark. Residues 146-331 enclose the CheB-type methylesterase domain; that stretch reads TLAASRLVAI…LTAIAPRLVQ (186 aa). Residues serine 158, histidine 185, and aspartate 278 contribute to the active site.

Belongs to the CheB family. Post-translationally, phosphorylated by CheA. Phosphorylation of the N-terminal regulatory domain activates the methylesterase activity.

It localises to the cytoplasm. It catalyses the reaction [protein]-L-glutamate 5-O-methyl ester + H2O = L-glutamyl-[protein] + methanol + H(+). It carries out the reaction L-glutaminyl-[protein] + H2O = L-glutamyl-[protein] + NH4(+). Involved in chemotaxis. Part of a chemotaxis signal transduction system that modulates chemotaxis in response to various stimuli. Catalyzes the demethylation of specific methylglutamate residues introduced into the chemoreceptors (methyl-accepting chemotaxis proteins or MCP) by CheR. Also mediates the irreversible deamidation of specific glutamine residues to glutamic acid. The polypeptide is Protein-glutamate methylesterase/protein-glutamine glutaminase 1 (Cupriavidus pinatubonensis (strain JMP 134 / LMG 1197) (Cupriavidus necator (strain JMP 134))).